The primary structure comprises 254 residues: Small ribosomal subunit protein eS1 (254 aa).

N-acetylalanine; partial is present on Ala-2.

It belongs to the eukaryotic ribosomal protein eS1 family. In terms of assembly, component of the small ribosomal subunit. Mature ribosomes consist of a small (40S) and a large (60S) subunit. The 40S subunit contains about 33 different proteins and 1 molecule of RNA (18S). The 60S subunit contains about 49 different proteins and 3 molecules of RNA (25S, 5.8S and 5S).

Its subcellular location is the cytoplasm. This chain is Small ribosomal subunit protein eS1, found in Zygosaccharomyces rouxii (strain ATCC 2623 / CBS 732 / NBRC 1130 / NCYC 568 / NRRL Y-229).